A 106-amino-acid chain; its full sequence is Nucleoid-associated protein XCV1128 (106 aa).

A disordered region spans residues 81 to 106; it reads IDAESKDRMGSATAGMQLPPGMKLPF.

It belongs to the YbaB/EbfC family. In terms of assembly, homodimer.

The protein resides in the cytoplasm. It localises to the nucleoid. Binds to DNA and alters its conformation. May be involved in regulation of gene expression, nucleoid organization and DNA protection. The sequence is that of Nucleoid-associated protein XCV1128 from Xanthomonas euvesicatoria pv. vesicatoria (strain 85-10) (Xanthomonas campestris pv. vesicatoria).